The chain runs to 122 residues: Acidic phospholipase A2 (122 aa).

Disulfide bonds link Cys-26/Cys-115, Cys-28/Cys-44, Cys-43/Cys-95, Cys-49/Cys-122, Cys-50/Cys-88, Cys-57/Cys-81, and Cys-75/Cys-86. Residues Tyr-27, Gly-29, and Gly-31 each coordinate Ca(2+). His-47 is an active-site residue. Asp-48 is a Ca(2+) binding site. The active site involves Asp-89.

This sequence belongs to the phospholipase A2 family. Group II subfamily. D49 sub-subfamily. The cofactor is Ca(2+). In terms of processing, contains 7 disulfide bonds. Expressed by the venom gland.

Its subcellular location is the secreted. It carries out the reaction a 1,2-diacyl-sn-glycero-3-phosphocholine + H2O = a 1-acyl-sn-glycero-3-phosphocholine + a fatty acid + H(+). In terms of biological role, snake venom phospholipase A2 (PLA2) that displays low systemic toxicity and causes severe symptoms only at very high concentrations (15 mg/kg). Has neither coagulant nor anticoagulant activity. PLA2 catalyzes the calcium-dependent hydrolysis of the 2-acyl groups in 3-sn-phosphoglycerides. This Bothrops ammodytoides (Yararanata) protein is Acidic phospholipase A2.